Consider the following 153-residue polypeptide: Calmodulin-like protein 4 (153 aa).

EF-hand domains are found at residues 8-43, 44-79, 81-116, and 117-152; these read DQIN…LGAS, PTPG…QIKQ, DPKK…LGEK, and LTHK…PVRD.

It belongs to the calmodulin family. Interacts with MYO7B; the interaction mediates the association of CALML4 with the IMAC/intermicrovillar adhesion complex. Interacts with MYO7A.

The protein localises to the cell projection. Its subcellular location is the microvillus. In terms of biological role, as part of the intermicrovillar adhesion complex/IMAC plays a role in epithelial brush border differentiation, controlling microvilli organization and length. Acts as a light chain for MYO7B and is required for efficient targeting of the IMAC to the tips of border brush microvilli. The chain is Calmodulin-like protein 4 (CALML4) from Bos taurus (Bovine).